Reading from the N-terminus, the 1083-residue chain is Solute carrier family 12 member 7 (1083 aa).

A disordered region spans residues 1 to 52 (MPTNFTVVPVEAHADGGGDETAERTEAPGTPEGPEPERPSPGDGNPRENSPF). Over 1–119 (MPTNFTVVPV…RREAKAPRMG (119 aa)) the chain is Cytoplasmic. The span at 12 to 26 (AHADGGGDETAERTE) shows a compositional bias: basic and acidic residues. Thr30 is subject to Phosphothreonine. 2 positions are modified to phosphoserine: Ser50 and Ser62. Residues 120–142 (TFIGVYLPCLQNILGVILFLRLT) form a discontinuously helical membrane-spanning segment. 2 residues coordinate K(+): Asn131 and Ile132. Chloride is bound at residue Val135. Residues 143–149 (WIVGVAG) are Extracellular-facing. A helical transmembrane segment spans residues 150–172 (VLESFLIVAMCCTCTMLTAISMS). Residues 173-196 (AIATNGVVPAGGSYYMISRSLGPE) are Cytoplasmic-facing. A helical transmembrane segment spans residues 197–225 (FGGAVGLCFYLGTTFAGAMYILGTIEIFL). Residues 226–249 (TYISPGAAIFQAEAAGGEAAAMLH) are Extracellular-facing. 2 helical membrane-spanning segments follow: residues 250-270 (NMRV…FVGV) and 272-300 (YVNK…KSAF). At 301–419 (DPPDIPVCLL…PYVLTDIAAS (119 aa)) the chain is on the extracellular side. 2 disulfides stabilise this stretch: Cys308-Cys323 and Cys343-Cys352. N-linked (GlcNAc...) asparagine glycosylation occurs at Asn312. Asn360 carries an N-linked (GlcNAc...) asparagine glycan. Residues 420-440 (FTLLVGIYFPSVTGIMAGSNR) form a helical membrane-spanning segment. K(+) contacts are provided by Pro429 and Thr432. Pro429 contacts chloride. Chloride is bound by residues Gly433 and Ile434. Residues 441 to 450 (SGDLKDAQKS) are Cytoplasmic-facing. A helical membrane pass occupies residues 451–473 (IPTGTILAIVTTSFIYLSCIVLF). The Extracellular portion of the chain corresponds to 474–504 (GACIEGVVLRDKFGEALQGNLVIGMLAWPSP). The helical transmembrane segment at 505–531 (WVIVIGSFFSTCGAGLQSLTGAPRLLQ) threads the bilayer. Residues 532-554 (AIARDGIVPFLQVFGHGKANGEP) lie on the Cytoplasmic side of the membrane. 2 helical membrane-spanning segments follow: residues 555–571 (TWAL…GILI) and 574–598 (LDSV…ACAV). Tyr589 is a chloride binding site. At 599–612 (QTLLRTPNWRPRFK) the chain is on the cytoplasmic side. The next 2 membrane-spanning stretches (helical) occupy residues 613–632 (FYHW…LMFI) and 636–651 (YYAL…IYKY). The Cytoplasmic segment spans residues 652-1083 (IEYRGAEKEW…GGREVITIYS (432 aa)). Positions 664 to 680 (GIRGLSLNAARYALLRV) are scissor helix. Thr973 and Thr980 each carry phosphothreonine.

It belongs to the SLC12A transporter family. K/Cl co-transporter subfamily. Homodimer; adopts a domain-swap conformation at the scissor helices connecting the transmembrane domain and C-terminal domain. Heterodimer with K-Cl cotransporter SLC12A5. As to expression, detected in muscle, brain, lung, heart and kidney.

The protein resides in the cell membrane. It carries out the reaction K(+)(in) + chloride(in) = K(+)(out) + chloride(out). Activated by N-ethylmaleimide (NEM). Inhibited by furosemide, DIDS and bumetanide. The inhibition is much stronger in the presence of 50 mM K(+) in the uptake medium. Inhibited by DIOA. Inhibited by WNK3. Functionally, mediates electroneutral potassium-chloride cotransport when activated by cell swelling. May mediate K(+) uptake into Deiters' cells in the cochlea and contribute to K(+) recycling in the inner ear. Important for the survival of cochlear outer and inner hair cells and the maintenance of the organ of Corti. May be required for basolateral Cl(-) extrusion in the kidney and contribute to renal acidification. In Homo sapiens (Human), this protein is Solute carrier family 12 member 7.